Consider the following 330-residue polypeptide: D-xylose-binding periplasmic protein (330 aa).

A signal peptide spans 1-23 (MKIKNILLTLCTSLLLTNVAAHA).

This sequence belongs to the bacterial solute-binding protein 2 family.

The protein localises to the periplasm. Involved in the high-affinity D-xylose membrane transport system. Binds with high affinity to xylose. This chain is D-xylose-binding periplasmic protein (xylF), found in Escherichia coli (strain K12).